The chain runs to 669 residues: Trissin receptor (669 aa).

Polar residues predominate over residues 1–15 (MIMTMMQTVRAWQQE). Positions 1–90 (MIMTMMQTVR…PTGQQPPRLP (90 aa)) are disordered. Residues 1–184 (MIMTMMQTVR…EYIFDRTDVR (184 aa)) lie on the Extracellular side of the membrane. Over residues 55–74 (NQNNGSPNSSPNQSTSAFRQ) the composition is skewed to low complexity. Asparagine 66 carries N-linked (GlcNAc...) asparagine glycosylation. Positions 79 to 89 (HPPTGQQPPRL) are enriched in pro residues. N-linked (GlcNAc...) asparagine glycosylation is found at asparagine 120 and asparagine 130. A helical transmembrane segment spans residues 185 to 205 (IIFITLYTLVFCCCFFGNLLV). Residues 206–217 (ILVVTLSRRLRS) lie on the Cytoplasmic side of the membrane. A helical membrane pass occupies residues 218–238 (ITNFFLANLAFADFCVGLFCV). Over 239–269 (MQNLSIYLIESWVFGEFLCRMYQFVHSLSYT) the chain is Extracellular. N-linked (GlcNAc...) asparagine glycosylation is present at asparagine 241. A disulfide bond links cysteine 257 and cysteine 340. The helical transmembrane segment at 270-290 (ASIFILVVICMERYFAIVHPI) threads the bilayer. Over 291 to 302 (TCKQILTAARLR) the chain is Cytoplasmic. A helical membrane pass occupies residues 303–323 (MVIVTVWITSAVYSTPKFVFS). The Extracellular segment spans residues 324–350 (KTIKNIHTQDGQEEEICVLDREMFNSK). Residues 351–371 (LLDMINFVLLYVMPLLVMTVL) form a helical membrane-spanning segment. Over 372-552 (YSKIAIALWR…SSNVLRARRG (181 aa)) the chain is Cytoplasmic. Residues 390–401 (VVQHQHQQPQQP) show a composition bias toward low complexity. Disordered stretches follow at residues 390 to 481 (VVQH…RGVS) and 515 to 537 (AHHQRAGNASVGGGSGGAGAGAT). The span at 414–429 (MYHHHPHHHHHHHQHH) shows a compositional bias: basic residues. The segment covering 441–454 (VGVGLGGGGGGGPG) has biased composition (gly residues). Residues 455 to 470 (PSLASGGSSTTSLSRK) show a composition bias toward low complexity. The segment covering 524–534 (SVGGGSGGAGA) has biased composition (gly residues). The chain crosses the membrane as a helical span at residues 553-573 (VVRMLIIFVLTFALCNLPYHA). At 574 to 595 (RKMWQYWSRSYRGDSNFNALLT) the chain is on the extracellular side. A helical membrane pass occupies residues 596 to 616 (PLTFLVTYFNSGVNPLLYAFL). The Cytoplasmic segment spans residues 617–669 (SRNFRKGMKELLLCSWKKGKGKSSSNSSMHHKRKALQTHSLPTDTTHIGNEQL). The tract at residues 635-669 (GKGKSSSNSSMHHKRKALQTHSLPTDTTHIGNEQL) is disordered. Residues 653-669 (QTHSLPTDTTHIGNEQL) are compositionally biased toward polar residues.

Belongs to the G-protein coupled receptor 1 family.

Its subcellular location is the cell membrane. In terms of biological role, G-protein coupled receptor which is activated by the Trissin peptide in vitro, leading to increased intracellular calcium ion levels. The chain is Trissin receptor from Drosophila melanogaster (Fruit fly).